The following is a 554-amino-acid chain: MAYYRTPHDVTALPAWQALQQHRDAMQGFSMREAFAADGKRFEEFSLSSCGLFLDYSKNLINEQTRDLLVGLANEVGLADAIKSMFSGEIINASEGRPVLHTALRRPVGDKLSVNGVNVMPDVHKVLNQITELVGRIHDGLWRGYSEKPITDVVNIGIGGSFLGPELVSEALLPYAQRGVRCHYLANIDGSEFHELSANLRAETTLFIVSSKSFNTLETLKNATAARTWYLAQGGSEAELYRHFIAVSSNKAAAVAFGMREENIFPMWDWVGGRYSLWSAIGLPIALAIGTANFKELLSGAYTMDQHFQTAPFDKNMPVLLALLGVWYGNFWGAQAHAILPYDHYLRNITKHLQQLDMESNGKSVLQDGSPVKTDTGPVIWGGVGCNGQHAYHQLLHQGTQLIPADFIVPVVSFNPVADHHQWLYANCLSQSQALMLGKTRDEAEAELRAKGMNEDDIAKLAPHKVIPGNRPSNTLVVERISPRRLGALVAMYEHKVFVQSVIWGINAFDQWGVELGKELGKGVYQRLVGSLEDSAEDGSTQGLINYFRGRHRG.

Glutamate 359 acts as the Proton donor in catalysis. Catalysis depends on residues histidine 390 and lysine 518.

It belongs to the GPI family.

Its subcellular location is the cytoplasm. The catalysed reaction is alpha-D-glucose 6-phosphate = beta-D-fructose 6-phosphate. It participates in carbohydrate biosynthesis; gluconeogenesis. Its pathway is carbohydrate degradation; glycolysis; D-glyceraldehyde 3-phosphate and glycerone phosphate from D-glucose: step 2/4. Functionally, catalyzes the reversible isomerization of glucose-6-phosphate to fructose-6-phosphate. The sequence is that of Glucose-6-phosphate isomerase from Pseudomonas entomophila (strain L48).